Consider the following 1976-residue polypeptide: Myosin-10 (1976 aa).

At Arg-18 the chain carries Omega-N-methylarginine. Residues 31–81 form the Myosin N-terminal SH3-like domain; it reads TAKKLVWIPSERHGFEAASIKEERGDEVMVELAENGKKAMVNKDDIQKMNP. In terms of domain architecture, Myosin motor spans 85-783; that stretch reads SKVEDMAELT…VLAHLEEERD (699 aa). 178–185 contacts ATP; it reads GESGAGKT. Lys-442 bears the N6-acetyllysine mark. The actin-binding stretch occupies residues 661–683; that stretch reads LTKLMATLRNTNPNFVRCIIPNH. Positions 786–815 constitute an IQ domain; sequence ITDIIIFFQAVCRGYLARKAFAKKQQQLSA. The stretch at 845–1976 forms a coiled coil; the sequence is LQVTRQEEEL…VNDTQPPQSE (1132 aa). Positions 1125 to 1175 are disordered; the sequence is EDFESEKASRNKAEKQKRDLSEELEALKTELEDTLDTTAAQQELRTKREQE. Residues 1129–1155 show a composition bias toward basic and acidic residues; that stretch reads SEKASRNKAEKQKRDLSEELEALKTEL. Ser-1145 carries the post-translational modification Phosphoserine. 3 positions are modified to N6-acetyllysine: Lys-1241, Lys-1301, and Lys-1645. 2 disordered regions span residues 1697–1718 and 1874–1976; these read ASSERARRHAEQERDELADEIA and KANA…PQSE. Basic and acidic residues predominate over residues 1698 to 1708; that stretch reads SSERARRHAEQ. At Arg-1930 the chain carries Omega-N-methylarginine. 4 positions are modified to phosphoserine: Ser-1935, Ser-1937, Ser-1938, and Ser-1939. An Omega-N-methylarginine modification is found at Arg-1940. 2 positions are modified to phosphoserine: Ser-1952 and Ser-1956. Thr-1960 carries the post-translational modification Phosphothreonine. A compositionally biased stretch (polar residues) spans 1967–1976; that stretch reads VNDTQPPQSE. Residue Ser-1975 is modified to Phosphoserine.

It belongs to the TRAFAC class myosin-kinesin ATPase superfamily. Myosin family. In terms of assembly, myosin is a hexameric protein that consists of 2 heavy chain subunits (MHC), 2 alkali light chain subunits (MLC) and 2 regulatory light chain subunits (MLC-2). Interacts with PLEKHG6. Interacts with ECPAS. Interacts with LARP6. Interacts with MCC. Interacts with KIF26B. Interacts with CFAP95. Post-translationally, phosphorylated by ABL2. In terms of tissue distribution, in newborn kidney, expressed in the mesenchyme and ureteric buds.

It localises to the cell projection. Its subcellular location is the lamellipodium. Involved with LARP6 in the stabilization of type I collagen mRNAs for CO1A1 and CO1A2. During cell spreading, plays an important role in cytoskeleton reorganization, focal contacts formation (in the central part but not the margins of spreading cells), and lamellipodial extension; this function is mechanically antagonized by MYH9. Cellular myosin that appears to play a role in cytokinesis, cell shape, and specialized functions such as secretion and capping. This is Myosin-10 (Myh10) from Mus musculus (Mouse).